We begin with the raw amino-acid sequence, 186 residues long: Peptidyl-tRNA hydrolase (186 aa).

Tyrosine 15 contacts tRNA. The Proton acceptor role is filled by histidine 20. Tyrosine 64, asparagine 66, and asparagine 112 together coordinate tRNA.

Belongs to the PTH family. In terms of assembly, monomer.

The protein localises to the cytoplasm. The enzyme catalyses an N-acyl-L-alpha-aminoacyl-tRNA + H2O = an N-acyl-L-amino acid + a tRNA + H(+). In terms of biological role, hydrolyzes ribosome-free peptidyl-tRNAs (with 1 or more amino acids incorporated), which drop off the ribosome during protein synthesis, or as a result of ribosome stalling. Functionally, catalyzes the release of premature peptidyl moieties from peptidyl-tRNA molecules trapped in stalled 50S ribosomal subunits, and thus maintains levels of free tRNAs and 50S ribosomes. The protein is Peptidyl-tRNA hydrolase of Azobacteroides pseudotrichonymphae genomovar. CFP2.